Reading from the N-terminus, the 1787-residue chain is ATP-dependent RNA helicase DEAH11, chloroplastic (1787 aa).

The N-terminal 33 residues, 1–33 (MRNSFPPSDGGRSTTDRRQQSFPSSSTNRYNSR), are a transit peptide targeting the chloroplast. The segment at 1–75 (MRNSFPPSDG…DRAPSSGFSP (75 aa)) is disordered. Positions 20–60 (QSFPSSSTNRYNSRSAQSSPPLNHCTTWNQQHSQYHNTNFP) are enriched in polar residues. Positions 313-477 (LKKIHCEQIM…LFDCGILHVN (165 aa)) constitute a Helicase ATP-binding domain. Residue 326-333 (GETGSGKS) coordinates ATP. The short motif at 424 to 427 (DEAH) is the DEAH box element. In terms of domain architecture, Helicase C-terminal spans 507–673 (DVVKMAVEIH…VALLRMLALG (167 aa)). The segment at 1557–1764 (IELECPICLS…EPCYAHLRTI (208 aa)) is TRIAD supradomain. Residues cysteine 1561, cysteine 1564, cysteine 1577, histidine 1579, cysteine 1582, cysteine 1585, cysteine 1604, cysteine 1609, cysteine 1649, cysteine 1654, cysteine 1672, cysteine 1675, cysteine 1680, cysteine 1683, histidine 1688, cysteine 1693, cysteine 1719, and cysteine 1722 each contribute to the Zn(2+) site. The RING-type 1 zinc-finger motif lies at 1561–1609 (CPICLSEVDDGYSLEGCSHLFCKACLLEQFEASMRNFDAFPILCSHIDC). Residues 1628–1693 (DELISASLSA…HLEYHPLITC (66 aa)) form an IBR-type zinc finger. An RING-type 2; atypical zinc finger spans residues 1719–1747 (CPICKSTIEKTDGCNHLQCRCGKHICWTC). The active site involves cysteine 1732. Residues cysteine 1737 and cysteine 1739 each coordinate Zn(2+).

It belongs to the DEAD box helicase family. DEAH subfamily.

The protein resides in the plastid. Its subcellular location is the chloroplast. The catalysed reaction is ATP + H2O = ADP + phosphate + H(+). The polypeptide is ATP-dependent RNA helicase DEAH11, chloroplastic (Arabidopsis thaliana (Mouse-ear cress)).